Consider the following 223-residue polypeptide: Alpha-S2-casein (223 aa).

The first 15 residues, 1 to 15 (MKFFIFTCLLAVALA), serve as a signal peptide directing secretion. Phosphoserine is present on residues Ser23, Ser24, Ser25, Ser72, Ser73, Ser74, Ser77, Ser145, Ser147, Ser151, and Ser159. Positions 77–141 (SAEVAPEEIK…AGPFTPTVNR (65 aa)) form a repeat. Positions 159–223 (STEVFTKKTK…TNAIPYVRYL (65 aa)) form a repeat.

Belongs to the alpha-casein family. As to expression, mammary gland specific. Secreted in milk.

It is found in the secreted. In terms of biological role, important role in the capacity of milk to transport calcium phosphate. In Capra hircus (Goat), this protein is Alpha-S2-casein (CSN1S2).